Consider the following 167-residue polypeptide: Transcription initiation factor TFIID subunit 10 (167 aa).

Disordered stretches follow at residues 1–56 and 119–139; these read MASD…EESE and TTNI…NPKD. A compositionally biased stretch (acidic residues) spans 41–56; that stretch reads EQPDVEEVPLTTEESE. Basic and acidic residues predominate over residues 130-139; the sequence is SSKDKKNPKD.

The protein belongs to the TAF10 family. Belongs to the TFIID complex which is composed of TATA binding protein (Tbp) and a number of TBP-associated factors (TAFs). Also a member of the histone acetylase (HAT) complex. In terms of tissue distribution, at embryonic stage 9, highest expression is detected within the ectoderm, ventral chord, and anterior foregut primordium. Later in development preferential expression is in the foregut, proventriculus, and central nervous system. Coexpressed with Taf10b in the lateral epidermis and anal plate.

The protein resides in the cytoplasm. Its subcellular location is the nucleus. TFIID is a multimeric protein complex that plays a central role in mediating promoter responses to various activators and repressors. The protein is Transcription initiation factor TFIID subunit 10 of Drosophila melanogaster (Fruit fly).